Reading from the N-terminus, the 421-residue chain is 4-hydroxy-3-methylbut-2-en-1-yl diphosphate synthase (flavodoxin) (421 aa).

[4Fe-4S] cluster-binding residues include Cys-311, Cys-314, Cys-357, and Glu-364.

Belongs to the IspG family. Requires [4Fe-4S] cluster as cofactor.

The enzyme catalyses (2E)-4-hydroxy-3-methylbut-2-enyl diphosphate + oxidized [flavodoxin] + H2O + 2 H(+) = 2-C-methyl-D-erythritol 2,4-cyclic diphosphate + reduced [flavodoxin]. Its pathway is isoprenoid biosynthesis; isopentenyl diphosphate biosynthesis via DXP pathway; isopentenyl diphosphate from 1-deoxy-D-xylulose 5-phosphate: step 5/6. Its function is as follows. Converts 2C-methyl-D-erythritol 2,4-cyclodiphosphate (ME-2,4cPP) into 1-hydroxy-2-methyl-2-(E)-butenyl 4-diphosphate. The sequence is that of 4-hydroxy-3-methylbut-2-en-1-yl diphosphate synthase (flavodoxin) from Xanthomonas campestris pv. campestris (strain 8004).